Here is a 304-residue protein sequence, read N- to C-terminus: MNGIIPLWKERGMTSHDCVYKLRKILHTKKVGHTGTLDPEVEGVLPICIGRATKLAEYVTDEGKVYVAEITLGKSTTTEDATGETVNTKELAEISAAELQAALTKLTGKITQIPPMFSAVKVNGKKLYEYARAGIEVERPSRQVDIYSLIRLDGDTALNQSNPTFQLEIACGKGTYIRTLAVMIGELLGYPAHMSKLERTRSGFFKKEDCLTLTEIDEMMQASDSSFLYPLEKGIESMAKLVIEEEVYAKVLNGGLLPTSLFAEVENEPRAALIFKDKLTAIYKPHPEKKDLWKPEKVIELNQA.

D38 serves as the catalytic Nucleophile.

This sequence belongs to the pseudouridine synthase TruB family. Type 1 subfamily.

The catalysed reaction is uridine(55) in tRNA = pseudouridine(55) in tRNA. In terms of biological role, responsible for synthesis of pseudouridine from uracil-55 in the psi GC loop of transfer RNAs. This is tRNA pseudouridine synthase B from Listeria monocytogenes serovar 1/2a (strain ATCC BAA-679 / EGD-e).